Consider the following 149-residue polypeptide: UPF0260 protein PA1299 (149 aa).

This sequence belongs to the UPF0260 family.

The sequence is that of UPF0260 protein PA1299 from Pseudomonas aeruginosa (strain ATCC 15692 / DSM 22644 / CIP 104116 / JCM 14847 / LMG 12228 / 1C / PRS 101 / PAO1).